Reading from the N-terminus, the 558-residue chain is Ankyrin repeat protein OPG189 (558 aa).

7 ANK repeats span residues 65–95, 169–205, 209–239, 243–272, 276–304, 339–368, and 372–401; these read YGENILHIYSMDDANTNIIIFFLDNVLNINK, YGCTLLHRCIYHYKKSESESYNELIKILLNNGSDVDK, HGNTPFILLCKHDIDNVELFEICLENANIDS, NGYTPLHYVSCRNKYDFVKSLISKGANVNT, FGTTPFYCGIIHGISLIKLYLESDTELEI, YNETSIYDAVSYNAYNMLVYLLNRNGDFET, and SGCTCISKAVANNNKIIMEVLLSKQPSLKI.

The protein belongs to the orthopoxvirus OPG189 protein family.

Its function is as follows. Contributes to viral release without involving rearrangement of host actin. In Homo sapiens (Human), this protein is Ankyrin repeat protein OPG189 (OPG189).